Consider the following 387-residue polypeptide: Guanylate kinase 1 (387 aa).

The Guanylate kinase-like domain maps to 137 to 319; sequence EKPIVISGPS…CYKKLKNLLG (183 aa). Position 144-151 (144-151) interacts with ATP; sequence GPSGVGKG. Residues Arg-177, Arg-270, and Arg-281 contribute to the active site. ATP is bound by residues Asn-304 and Asp-305.

It belongs to the guanylate kinase family. Monomer.

It catalyses the reaction GMP + ATP = GDP + ADP. Functionally, essential for recycling GMP and indirectly, cGMP. Required for normal development of the gametophyte and embryo, in association with GK2. The protein is Guanylate kinase 1 (GK-1) of Arabidopsis thaliana (Mouse-ear cress).